A 588-amino-acid polypeptide reads, in one-letter code: 2-isopropylmalate synthase (588 aa).

The Pyruvate carboxyltransferase domain occupies 40–314 (PRWCAVDLRD…DPQIDFSDLD (275 aa)). Aspartate 49, histidine 253, histidine 255, and asparagine 289 together coordinate Mg(2+). Residues 456 to 588 (APLDRVEEKW…TVREPELAAV (133 aa)) form a regulatory domain region.

This sequence belongs to the alpha-IPM synthase/homocitrate synthase family. LeuA type 2 subfamily. As to quaternary structure, homodimer. Mg(2+) is required as a cofactor.

It is found in the cytoplasm. The enzyme catalyses 3-methyl-2-oxobutanoate + acetyl-CoA + H2O = (2S)-2-isopropylmalate + CoA + H(+). It functions in the pathway amino-acid biosynthesis; L-leucine biosynthesis; L-leucine from 3-methyl-2-oxobutanoate: step 1/4. Catalyzes the condensation of the acetyl group of acetyl-CoA with 3-methyl-2-oxobutanoate (2-ketoisovalerate) to form 3-carboxy-3-hydroxy-4-methylpentanoate (2-isopropylmalate). This is 2-isopropylmalate synthase from Clavibacter sepedonicus (Clavibacter michiganensis subsp. sepedonicus).